We begin with the raw amino-acid sequence, 336 residues long: Flavonoid 4'-O-methyltransferase 3 (336 aa).

2 residues coordinate S-adenosyl-L-methionine: tyrosine 140 and aspartate 203. The active-site Proton acceptor is histidine 241.

Belongs to the class I-like SAM-binding methyltransferase superfamily. Cation-independent O-methyltransferase family. In terms of assembly, homodimer. As to expression, expressed in leaves.

It catalyses the reaction scutellarein 7-methyl ether + S-adenosyl-L-methionine = ladanein + S-adenosyl-L-homocysteine + H(+). The enzyme catalyses cirsimaritin + S-adenosyl-L-methionine = salvigenin + S-adenosyl-L-homocysteine + H(+). The catalysed reaction is cirsiliol + S-adenosyl-L-methionine = eupatorin + S-adenosyl-L-homocysteine + H(+). It carries out the reaction genkwanin + S-adenosyl-L-methionine = apigenin 4',7-dimethyl ether + S-adenosyl-L-homocysteine. It participates in flavonoid metabolism. With respect to regulation, substrate inhibition by genkwanin (GENK) at concentrations above 2.5 mM. Functionally, flavonoid 4'-O-methyltransferase involved in the biosynthesis of polymethoxylated flavonoids natural products such as nevadensin and salvigenin, aroma compounds which contribute to the flavor of sweet basil, and exhibit pharmacological activities such as anti-allergic, anti-oxidant, antibacterial, anti-proliferative, and anti-inflammatory effects. Catalyzes S-adenosylmethionine-dependent regioselective 4'-O-methylation of flavonoids; active on various hydroxylated flavonoid substrates, including scutellarein-7-methyl ether (SCU7Me) and cirsimaritin (CIRM), and, with a lower efficiency, hispidulin, ladanein (LAD), cirsioliol (CIRL) and genkwanin (GENK). The sequence is that of Flavonoid 4'-O-methyltransferase 3 from Ocimum basilicum (Sweet basil).